The following is a 600-amino-acid chain: MVNNMTDLTAQEPAWQTRDHLDDPVIGELRNRFGPDAFTVQATRTGVPVVWIKREQLLEVGDFLKKLPKPYVMLFDLHGMDERLRTHREGLPAADFSVFYHLISIDRNRDIMLKVALAENDLHVPTFTKLFPNANWYERETWDLFGITFDGHPNLRRIMMPQTWKGHPLRKDYPARATEFSPFELTKAKQDLEMEALTFKPEEWGMKRGTENEDFMFLNLGPNHPSAHGAFRIVLQLDGEEIVDCVPDIGYHHRGAEKMGERQSWHSYIPYTDRIEYLGGCVNEMPYVLAVEKLAGITVPDRVNVIRVMLSELFRINSHLLYISTFIQDVGAMTPVFFAFTDRQKIYDLVEAITGFRMHPAWFRIGGVAHDLPRGWDRLLREFLDWMPKRLASYEKAALQNTILKGRSQGVAAYGAKEALEWGTTGAGLRATGIDFDVRKARPYSGYENFDFEIPVGGGVSDCYTRVMLKVEELRQSLRILEQCLNNMPEGPFKADHPLTTPPPKERTLQHIETLITHFLQVSWGPVMPANESFQMIEATKGINSYYLTSDGSTMSYRTRIRTPSYAHLQQIPAAIRGSLVSDLIVYLGSIDFVMSDVDR.

The interval 1 to 190 (MVNNMTDLTA…SPFELTKAKQ (190 aa)) is NADH dehydrogenase I subunit C. The tract at residues 214 to 600 (DFMFLNLGPN…IDFVMSDVDR (387 aa)) is NADH dehydrogenase I subunit D.

In the N-terminal section; belongs to the complex I 30 kDa subunit family. It in the C-terminal section; belongs to the complex I 49 kDa subunit family. As to quaternary structure, NDH-1 is composed of 13 different subunits. Subunits NuoB, CD, E, F, and G constitute the peripheral sector of the complex.

The protein localises to the cell inner membrane. It carries out the reaction a quinone + NADH + 5 H(+)(in) = a quinol + NAD(+) + 4 H(+)(out). NDH-1 shuttles electrons from NADH, via FMN and iron-sulfur (Fe-S) centers, to quinones in the respiratory chain. The immediate electron acceptor for the enzyme in this species is believed to be ubiquinone. Couples the redox reaction to proton translocation (for every two electrons transferred, four hydrogen ions are translocated across the cytoplasmic membrane), and thus conserves the redox energy in a proton gradient. This is NADH-quinone oxidoreductase subunit C/D from Escherichia coli (strain ATCC 8739 / DSM 1576 / NBRC 3972 / NCIMB 8545 / WDCM 00012 / Crooks).